Consider the following 298-residue polypeptide: Syntenin-1 (298 aa).

Ser-2 is subject to N-acetylserine. Residues 2–60 (SLYPSLEDLKVDKVIQAQTAFSANPANPAILSEASAPIPHDGNLYPRLYPELSQYMGLS) are interaction with PDCD6IP. 3 consecutive short sequence motifs (LYPX(n)L motif) follow at residues 3–7 (LYPSL), 45–49 (LYPRL), and 49–53 (LYPEL). Residue Ser-6 is modified to Phosphoserine. Tyr-46 is modified (phosphotyrosine). PDZ domains follow at residues 114-193 (EVIL…IRDR) and 198-273 (TITM…MPAF). A 1,2-diacyl-sn-glycero-3-phospho-(1D-myo-inositol-4,5-bisphosphate) contacts are provided by residues Asn-215 and 250–251 (KD).

Monomer and homodimer. Interacts with SDC1, SDC2, SDC3, SDC4, NRXN2, EPHA7, EPHB1, NF2 isoform 1, TGFA and IL5RA. Interacts with NFASC and PTPRJ. Interacts with SDCBP2. Interacts with PDCD6IP. Forms a complex with PDCD6IP and SDC2. Interacts (via C-terminus) with TGFBR1. Binds to FZD7; this interaction is increased by inositol trisphosphate (IP3). Interacts with SMO. Post-translationally, phosphorylated on tyrosine residues. As to expression, expressed in lung cancers, including adenocarcinoma, squamous cell carcinoma and small-cell carcinoma (at protein level). Widely expressed. Expressed in fetal kidney, liver, lung and brain. In adult highest expression in heart and placenta.

The protein resides in the cell junction. Its subcellular location is the focal adhesion. It localises to the adherens junction. It is found in the cell membrane. The protein localises to the endoplasmic reticulum membrane. The protein resides in the nucleus. Its subcellular location is the melanosome. It localises to the cytoplasm. It is found in the cytosol. The protein localises to the cytoskeleton. The protein resides in the secreted. Its subcellular location is the extracellular exosome. It localises to the membrane raft. In terms of biological role, multifunctional adapter protein involved in diverse array of functions including trafficking of transmembrane proteins, neuro and immunomodulation, exosome biogenesis, and tumorigenesis. Positively regulates TGFB1-mediated SMAD2/3 activation and TGFB1-induced epithelial-to-mesenchymal transition (EMT) and cell migration in various cell types. May increase TGFB1 signaling by enhancing cell-surface expression of TGFR1 by preventing the interaction between TGFR1 and CAV1 and subsequent CAV1-dependent internalization and degradation of TGFR1. In concert with SDC1/4 and PDCD6IP, regulates exosome biogenesis. Regulates migration, growth, proliferation, and cell cycle progression in a variety of cancer types. In adherens junctions may function to couple syndecans to cytoskeletal proteins or signaling components. Seems to couple transcription factor SOX4 to the IL-5 receptor (IL5RA). May also play a role in vesicular trafficking. Seems to be required for the targeting of TGFA to the cell surface in the early secretory pathway. In Homo sapiens (Human), this protein is Syntenin-1 (SDCBP).